Reading from the N-terminus, the 122-residue chain is Ribosome-binding factor A (122 aa).

Belongs to the RbfA family. Monomer. Binds 30S ribosomal subunits, but not 50S ribosomal subunits or 70S ribosomes.

It is found in the cytoplasm. Functionally, one of several proteins that assist in the late maturation steps of the functional core of the 30S ribosomal subunit. Associates with free 30S ribosomal subunits (but not with 30S subunits that are part of 70S ribosomes or polysomes). Required for efficient processing of 16S rRNA. May interact with the 5'-terminal helix region of 16S rRNA. The polypeptide is Ribosome-binding factor A (Cupriavidus pinatubonensis (strain JMP 134 / LMG 1197) (Cupriavidus necator (strain JMP 134))).